The chain runs to 142 residues: NCT transcriptional regulatory complex subunit B (142 aa).

It belongs to the NC2 beta/DR1 family. Forms the NCT transcriptional regulatory complex with nctA and mot1.

It localises to the nucleus. Part of the NCT transcriptional regulatory complex that acts as a key regulator of ergosterol biosynthesis and the azole exporter cdr1B. The NCT complex binds the promoters of genes linked to azole susceptibility, and especially represses the expression of cdr1B transporter. This Aspergillus fumigatus (strain CBS 144.89 / FGSC A1163 / CEA10) (Neosartorya fumigata) protein is NCT transcriptional regulatory complex subunit B.